A 263-amino-acid chain; its full sequence is Ribosomal RNA large subunit methyltransferase E (263 aa).

Positions 48, 50, 68, 88, and 118 each coordinate S-adenosyl-L-methionine. The Proton acceptor role is filled by lysine 158. The region spanning 205–263 (PVREGDIVEATIEDIGEEGDGIAKVENFTVFVSGVEDGETVEVRIDDVKPRYAFAEPVE) is the TRAM domain.

This sequence belongs to the class I-like SAM-binding methyltransferase superfamily. RNA methyltransferase RlmE family.

The protein localises to the cytoplasm. It catalyses the reaction uridine(2552) in 23S rRNA + S-adenosyl-L-methionine = 2'-O-methyluridine(2552) in 23S rRNA + S-adenosyl-L-homocysteine + H(+). Specifically methylates the uridine in position 2552 of 23S rRNA at the 2'-O position of the ribose in the fully assembled 50S ribosomal subunit. This is Ribosomal RNA large subunit methyltransferase E from Haloarcula marismortui (strain ATCC 43049 / DSM 3752 / JCM 8966 / VKM B-1809) (Halobacterium marismortui).